An 876-amino-acid polypeptide reads, in one-letter code: Alanine--tRNA ligase (876 aa).

The Zn(2+) site is built by His-565, His-569, Cys-667, and His-671.

This sequence belongs to the class-II aminoacyl-tRNA synthetase family. The cofactor is Zn(2+).

It localises to the cytoplasm. It carries out the reaction tRNA(Ala) + L-alanine + ATP = L-alanyl-tRNA(Ala) + AMP + diphosphate. Functionally, catalyzes the attachment of alanine to tRNA(Ala) in a two-step reaction: alanine is first activated by ATP to form Ala-AMP and then transferred to the acceptor end of tRNA(Ala). Also edits incorrectly charged Ser-tRNA(Ala) and Gly-tRNA(Ala) via its editing domain. The chain is Alanine--tRNA ligase from Staphylococcus aureus (strain MRSA252).